The primary structure comprises 332 residues: Anthranilate phosphoribosyltransferase (332 aa).

5-phospho-alpha-D-ribose 1-diphosphate-binding positions include G79, 82 to 83 (GD), S87, 89 to 92 (NIST), 107 to 115 (KHGNRSVSS), and S119. G79 is a binding site for anthranilate. S91 contributes to the Mg(2+) binding site. N110 lines the anthranilate pocket. An anthranilate-binding site is contributed by R165. Mg(2+) is bound by residues D223 and E224.

It belongs to the anthranilate phosphoribosyltransferase family. As to quaternary structure, homodimer. Requires Mg(2+) as cofactor.

It catalyses the reaction N-(5-phospho-beta-D-ribosyl)anthranilate + diphosphate = 5-phospho-alpha-D-ribose 1-diphosphate + anthranilate. Its pathway is amino-acid biosynthesis; L-tryptophan biosynthesis; L-tryptophan from chorismate: step 2/5. In terms of biological role, catalyzes the transfer of the phosphoribosyl group of 5-phosphorylribose-1-pyrophosphate (PRPP) to anthranilate to yield N-(5'-phosphoribosyl)-anthranilate (PRA). In Sodalis glossinidius (strain morsitans), this protein is Anthranilate phosphoribosyltransferase.